The sequence spans 190 residues: Isopentenyl-diphosphate Delta-isomerase (190 aa).

Positions 27 and 34 each coordinate Mn(2+). One can recognise a Nudix hydrolase domain in the interval 32–171 (PLHFAFSSYI…PFVFSPWMVD (140 aa)). Cys-69 is an active-site residue. Cys-69 contacts Mg(2+). His-71 is a Mn(2+) binding site. Glu-89 contacts Mg(2+). Glu-119 and Glu-121 together coordinate Mn(2+). The active site involves Glu-121.

The protein belongs to the IPP isomerase type 1 family. Mg(2+) is required as a cofactor. It depends on Mn(2+) as a cofactor.

The protein resides in the cytoplasm. It carries out the reaction isopentenyl diphosphate = dimethylallyl diphosphate. The protein operates within isoprenoid biosynthesis; dimethylallyl diphosphate biosynthesis; dimethylallyl diphosphate from isopentenyl diphosphate: step 1/1. Functionally, catalyzes the 1,3-allylic rearrangement of the homoallylic substrate isopentenyl (IPP) to its highly electrophilic allylic isomer, dimethylallyl diphosphate (DMAPP). This is Isopentenyl-diphosphate Delta-isomerase from Corynebacterium efficiens (strain DSM 44549 / YS-314 / AJ 12310 / JCM 11189 / NBRC 100395).